Consider the following 984-residue polypeptide: Lateral signaling target protein 2 homolog (984 aa).

Disordered regions lie at residues 308–462 (PLGS…DTDE), 508–527 (YGTT…PSTS), 539–642 (RLRL…SSLS), and 749–900 (DNVF…SPPA). Composition is skewed to low complexity over residues 326 to 356 (TTSS…TTST), 369 to 380 (NNHNSNSNSSTN), 387 to 404 (TLRS…TPTA), and 412 to 433 (PSHS…PADW). The span at 434–462 (SDGDDEDEDDDDIEVDEEDLESSDDDTDE) shows a compositional bias: acidic residues. A phosphoserine mark is found at Ser-544 and Ser-545. Residues 571–611 (RESHSHRHHQRHHHHHHHRHSHQHQHRQPHPHRTTRSGRKR) show a composition bias toward basic residues. The span at 630 to 642 (LASGDTSAASSLS) shows a compositional bias: low complexity. 2 stretches are compositionally biased toward polar residues: residues 760-779 (ATGQ…TIDL) and 789-806 (SGAT…SRSL). Position 805 is a phosphoserine (Ser-805). Composition is skewed to low complexity over residues 811–869 (AASS…PVSA) and 886–899 (PSSA…LSPP). Residues 904 to 964 (DGKAPRCMAC…VCRDCYVREV (61 aa)) form an FYVE-type zinc finger. Residues Cys-910, Cys-913, Cys-926, Cys-929, Cys-934, Cys-937, Cys-956, and Cys-959 each coordinate Zn(2+).

The protein belongs to the lst-2 family.

Negative regulator of epidermal growth factor receptor (EGFR) signaling. This Drosophila yakuba (Fruit fly) protein is Lateral signaling target protein 2 homolog.